Consider the following 203-residue polypeptide: Excretory canal abnormal exc-13 (203 aa).

Residues 1-20 (MIGFLKFALIGTVLLGVANG) form the signal peptide. N-linked (GlcNAc...) asparagine glycans are attached at residues Asn32, Asn84, and Asn188.

The protein belongs to the UPF0376 family.

The protein localises to the secreted. This is Excretory canal abnormal exc-13 from Caenorhabditis elegans.